The sequence spans 158 residues: Transcriptional repressor NrdR (158 aa).

A zinc finger lies at 3–34; that stretch reads CPSCQNTDSRVLESRAADAGRSVRRRRECLHC. One can recognise an ATP-cone domain in the interval 49-139; the sequence is ITVLKRNGNR…VYRHFRGIND (91 aa).

Belongs to the NrdR family. Zn(2+) serves as cofactor.

Its function is as follows. Negatively regulates transcription of bacterial ribonucleotide reductase nrd genes and operons by binding to NrdR-boxes. This chain is Transcriptional repressor NrdR, found in Prochlorococcus marinus (strain MIT 9303).